The following is a 253-amino-acid chain: Triosephosphate isomerase (253 aa).

Substrate is bound at residue 13–15 (NWK). His-100 (electrophile) is an active-site residue. Residue Glu-169 is the Proton acceptor of the active site. Substrate is bound by residues Gly-175, Ser-208, and 229-230 (GG).

This sequence belongs to the triosephosphate isomerase family. As to quaternary structure, homodimer.

The protein resides in the cytoplasm. It carries out the reaction D-glyceraldehyde 3-phosphate = dihydroxyacetone phosphate. It functions in the pathway carbohydrate biosynthesis; gluconeogenesis. Its pathway is carbohydrate degradation; glycolysis; D-glyceraldehyde 3-phosphate from glycerone phosphate: step 1/1. In terms of biological role, involved in the gluconeogenesis. Catalyzes stereospecifically the conversion of dihydroxyacetone phosphate (DHAP) to D-glyceraldehyde-3-phosphate (G3P). The polypeptide is Triosephosphate isomerase (Synechococcus sp. (strain RCC307)).